We begin with the raw amino-acid sequence, 110 residues long: Red pigment-concentrating prohormone (110 aa).

An N-terminal signal peptide occupies residues 1–25; sequence MVRRTGVTLLVVALVVVALVSSVSA. Gln-26 is subject to Pyrrolidone carboxylic acid. Trp-33 carries the post-translational modification Tryptophan amide.

It belongs to the AKH/HRTH/RPCH family.

It is found in the secreted. Functionally, this hormone adapts the animal to light backgrounds by stimulating concentration of the pigment of its red body-chromatophores. In Carcinus maenas (Common shore crab), this protein is Red pigment-concentrating prohormone.